A 141-amino-acid polypeptide reads, in one-letter code: Ly6/PLAUR domain-containing protein 1 (141 aa).

The signal sequence occupies residues 1 to 20 (MWVLGIAATFCGLFLLPGFA). Disulfide bonds link cysteine 25-cysteine 54, cysteine 28-cysteine 37, cysteine 46-cysteine 71, cysteine 77-cysteine 100, cysteine 88-cysteine 97, and cysteine 101-cysteine 106. A UPAR/Ly6 domain is found at 25–107 (CYQCEEFQLN…ISCCNTPLCN (83 aa)). Asparagine 45 carries an N-linked (GlcNAc...) asparagine glycan. The GPI-anchor amidated serine moiety is linked to residue serine 117. Residues 118-141 (ASALRPGLRTTILFLKLALFSAHC) constitute a propeptide, removed in mature form.

Interacts with CHRNA4 and nAChRs containing alpha-4:beta-2 (CHRNA4:CHRNB2) and alpha-7 (CHRNA7) subunits.

It localises to the cell membrane. Functionally, believed to act as a modulator of nicotinic acetylcholine receptors (nAChRs) activity. In vitro increases receptor desensitization and decreases affinity for ACh of alpha-4:beta-2-containing nAChRs. May play a role in the intracellular trafficking of alpha-4:beta-2 and alpha-7-containing nAChRs and may inhibit their expression at the cell surface. May be involved in the control of anxiety. This is Ly6/PLAUR domain-containing protein 1 (LYPD1) from Homo sapiens (Human).